Reading from the N-terminus, the 231-residue chain is NADH-ubiquinone oxidoreductase chain 4 (231 aa).

Helical transmembrane passes span 1–21, 34–54, 63–85, 89–111, 128–148, 156–176, and 211–231; these read PIAG…YGII, MFLP…LTCL, IAYS…TPWG, AMAL…NTTY, ILPM…AIPP, LLIM…LGLS, and LLMI…ELII.

The protein belongs to the complex I subunit 4 family.

It localises to the mitochondrion membrane. The catalysed reaction is a ubiquinone + NADH + 5 H(+)(in) = a ubiquinol + NAD(+) + 4 H(+)(out). Its function is as follows. Core subunit of the mitochondrial membrane respiratory chain NADH dehydrogenase (Complex I) that is believed to belong to the minimal assembly required for catalysis. Complex I functions in the transfer of electrons from NADH to the respiratory chain. The immediate electron acceptor for the enzyme is believed to be ubiquinone. This is NADH-ubiquinone oxidoreductase chain 4 (MT-ND4) from Agkistrodon piscivorus piscivorus (Eastern cottonmouth).